The primary structure comprises 289 residues: Release factor glutamine methyltransferase (289 aa).

S-adenosyl-L-methionine-binding positions include 130 to 134 (GTGTG), Asp153, Trp182, and Asn196. Residue 196 to 199 (NPPY) participates in substrate binding.

This sequence belongs to the protein N5-glutamine methyltransferase family. PrmC subfamily.

The enzyme catalyses L-glutaminyl-[peptide chain release factor] + S-adenosyl-L-methionine = N(5)-methyl-L-glutaminyl-[peptide chain release factor] + S-adenosyl-L-homocysteine + H(+). Methylates the class 1 translation termination release factors RF1/PrfA and RF2/PrfB on the glutamine residue of the universally conserved GGQ motif. The chain is Release factor glutamine methyltransferase from Agrobacterium fabrum (strain C58 / ATCC 33970) (Agrobacterium tumefaciens (strain C58)).